We begin with the raw amino-acid sequence, 275 residues long: Lacto-N-neotetraose biosynthesis glycosyltransferase LgtB (275 aa).

It belongs to the glycosyltransferase 25 family.

It functions in the pathway glycan metabolism; lacto-N-neotetraose biosynthesis. The protein operates within bacterial outer membrane biogenesis; lipooligosaccharide biosynthesis. Functionally, adds the second galactose to the lacto-N-tetraose chain in lipooligosaccharide (LOS). This chain is Lacto-N-neotetraose biosynthesis glycosyltransferase LgtB (lgtB), found in Neisseria meningitidis serogroup B (strain ATCC BAA-335 / MC58).